The sequence spans 144 residues: Transcription antitermination protein NusB (144 aa).

It belongs to the NusB family.

In terms of biological role, involved in transcription antitermination. Required for transcription of ribosomal RNA (rRNA) genes. Binds specifically to the boxA antiterminator sequence of the ribosomal RNA (rrn) operons. This is Transcription antitermination protein NusB from Pasteurella multocida (strain Pm70).